Reading from the N-terminus, the 137-residue chain is Putative pre-16S rRNA nuclease (137 aa).

Belongs to the YqgF nuclease family.

It is found in the cytoplasm. Functionally, could be a nuclease involved in processing of the 5'-end of pre-16S rRNA. The chain is Putative pre-16S rRNA nuclease from Oceanobacillus iheyensis (strain DSM 14371 / CIP 107618 / JCM 11309 / KCTC 3954 / HTE831).